A 286-amino-acid polypeptide reads, in one-letter code: Pyridoxal kinase PdxY (286 aa).

Residues serine 9 and 44 to 45 (TQ) each bind substrate. 3 residues coordinate ATP: aspartate 111, glutamate 148, and lysine 181. Aspartate 222 is a substrate binding site.

The protein belongs to the pyridoxine kinase family. PdxY subfamily. Homodimer. It depends on Mg(2+) as a cofactor.

The catalysed reaction is pyridoxal + ATP = pyridoxal 5'-phosphate + ADP + H(+). Its pathway is cofactor metabolism; pyridoxal 5'-phosphate salvage; pyridoxal 5'-phosphate from pyridoxal: step 1/1. Pyridoxal kinase involved in the salvage pathway of pyridoxal 5'-phosphate (PLP). Catalyzes the phosphorylation of pyridoxal to PLP. The protein is Pyridoxal kinase PdxY of Actinobacillus succinogenes (strain ATCC 55618 / DSM 22257 / CCUG 43843 / 130Z).